The following is a 355-amino-acid chain: Peptide chain release factor 1 (355 aa).

At Q231 the chain carries N5-methylglutamine. The segment covering 280-291 (SERLAKESEARK) has biased composition (basic and acidic residues). The disordered stretch occupies residues 280–303 (SERLAKESEARKSQVGSGDRSERI).

It belongs to the prokaryotic/mitochondrial release factor family. In terms of processing, methylated by PrmC. Methylation increases the termination efficiency of RF1.

It localises to the cytoplasm. Functionally, peptide chain release factor 1 directs the termination of translation in response to the peptide chain termination codons UAG and UAA. In Campylobacter jejuni subsp. jejuni serotype O:2 (strain ATCC 700819 / NCTC 11168), this protein is Peptide chain release factor 1.